We begin with the raw amino-acid sequence, 277 residues long: uncharacterized protein (277 aa).

Residues 232–262 (NNESAICESQASSKEDERSDKTTSSSKKKSF) are disordered. Residues 234–243 (ESAICESQAS) are compositionally biased toward polar residues.

Its subcellular location is the cytoplasm. It is found in the nucleus. This is an uncharacterized protein from Schizosaccharomyces pombe (strain 972 / ATCC 24843) (Fission yeast).